The primary structure comprises 189 residues: Elongation factor P (189 aa).

The residue at position 34 (Lys-34) is an N6-(3,6-diaminohexanoyl)-5-hydroxylysine.

It belongs to the elongation factor P family. In terms of processing, may be beta-lysylated on the epsilon-amino group of Lys-34 by the combined action of EpmA and EpmB, and then hydroxylated on the C5 position of the same residue by EpmC (if this protein is present). Lysylation is critical for the stimulatory effect of EF-P on peptide-bond formation. The lysylation moiety may extend toward the peptidyltransferase center and stabilize the terminal 3-CCA end of the tRNA. Hydroxylation of the C5 position on Lys-34 may allow additional potential stabilizing hydrogen-bond interactions with the P-tRNA.

The protein localises to the cytoplasm. It participates in protein biosynthesis; polypeptide chain elongation. Its function is as follows. Involved in peptide bond synthesis. Alleviates ribosome stalling that occurs when 3 or more consecutive Pro residues or the sequence PPG is present in a protein, possibly by augmenting the peptidyl transferase activity of the ribosome. Modification of Lys-34 is required for alleviation. The polypeptide is Elongation factor P (Saccharophagus degradans (strain 2-40 / ATCC 43961 / DSM 17024)).